Here is a 295-residue protein sequence, read N- to C-terminus: MTKQIQKTVSVCIIGRPNSGKSTLLNRIIGEKLSIVTPKVQTTRSIITGIITLNDTQIILYDTPGIFEPKGTLEKAMVRCAWSSLHSADIVMLIIDSLKPLDSITHDILNKLRSLNVVPVFLLNKIDVESKYIDDTKAFLAENYSDSLLFPISAISGENVDKLLEYITSKAKIAPWLYEEDDITDLPMRFIAAEITREQLFLGLQQELPYKLTVQTEKWEELKDKSVKINQIIVVSRESYKTIILGKNGSKIKELGAKSRMQMQQFFGFPVHLFLFVKVQELWEDNSDYYEYMKI.

Residues Lys-7–Trp-176 enclose the Era-type G domain. The segment at Gly-15 to Ser-22 is G1. Gly-15–Ser-22 lines the GTP pocket. The tract at residues Gln-41–Ser-45 is G2. A G3 region spans residues Asp-62–Gly-65. Residues Asp-62 to Ile-66 and Asn-124 to Asp-127 each bind GTP. Residues Asn-124–Asp-127 are G4. Residues Ile-152–Ala-154 are G5. Residues Leu-204–Glu-281 enclose the KH type-2 domain.

This sequence belongs to the TRAFAC class TrmE-Era-EngA-EngB-Septin-like GTPase superfamily. Era GTPase family. Monomer.

The protein resides in the cytoplasm. It is found in the cell inner membrane. In terms of biological role, an essential GTPase that binds both GDP and GTP, with rapid nucleotide exchange. Plays a role in 16S rRNA processing and 30S ribosomal subunit biogenesis and possibly also in cell cycle regulation and energy metabolism. The protein is GTPase Era of Rickettsia bellii (strain RML369-C).